The sequence spans 159 residues: Cyclic pyranopterin monophosphate synthase (159 aa).

Substrate is bound by residues 75 to 77 (LCH) and 113 to 114 (ME). The active site involves Asp128.

Belongs to the MoaC family. In terms of assembly, homohexamer; trimer of dimers.

The catalysed reaction is (8S)-3',8-cyclo-7,8-dihydroguanosine 5'-triphosphate = cyclic pyranopterin phosphate + diphosphate. It participates in cofactor biosynthesis; molybdopterin biosynthesis. Functionally, catalyzes the conversion of (8S)-3',8-cyclo-7,8-dihydroguanosine 5'-triphosphate to cyclic pyranopterin monophosphate (cPMP). In Aliivibrio fischeri (strain MJ11) (Vibrio fischeri), this protein is Cyclic pyranopterin monophosphate synthase.